Consider the following 470-residue polypeptide: Isocitrate dehydrogenase (NAD(+)), mitochondrial (470 aa).

Residues Met-1 to Arg-26 constitute a mitochondrion transit peptide. NAD(+) is bound by residues Thr-138–Thr-140 and Asn-159. D-threo-isocitrate-binding positions include Ser-157 to Arg-163, Arg-193, Tyr-200, Lys-275, and Asp-319. Asp-319 contacts Mg(2+). Lys-324 lines the NAD(+) pocket. Residue Asp-343 participates in D-threo-isocitrate binding. 2 residues coordinate Mg(2+): Asp-343 and Asp-347. NAD(+) is bound by residues His-380–Asp-385 and Asn-399.

This sequence belongs to the isocitrate and isopropylmalate dehydrogenases family. As to quaternary structure, forms homodimers. Mg(2+) is required as a cofactor. Mn(2+) serves as cofactor.

It localises to the mitochondrion. The catalysed reaction is D-threo-isocitrate + NAD(+) = 2-oxoglutarate + CO2 + NADH. Its activity is regulated as follows. The homodimer exhibits allosteric regulation by isocitrate. Performs an essential role in the oxidative function of the tricarboxylic acid cycle and respiration. Catalyzes the decarboxylation of isocitrate to produce 2-oxoglutarate and generate NADH to provide electrons for energy production. This chain is Isocitrate dehydrogenase (NAD(+)), mitochondrial, found in Ostreococcus tauri.